A 213-amino-acid chain; its full sequence is Protein nullo (213 aa).

In terms of tissue distribution, blastoderm. Throughout the entire cortex of the embryo although the distribution is not uniform.

Its function is as follows. Actin-myosin network stability during cellularization. Might be involved in increasing actin-actin interactions or membrane-to-cytoskeleton attachments. nullo together with Sry-a and bnk may provide auxiliary functions, by acting both to stabilize a large and dynamic microfilament structure and regulate its functions. This is Protein nullo (nullo) from Drosophila melanogaster (Fruit fly).